Here is a 580-residue protein sequence, read N- to C-terminus: Proline--tRNA ligase (580 aa).

The protein belongs to the class-II aminoacyl-tRNA synthetase family. ProS type 1 subfamily. Homodimer.

It localises to the cytoplasm. It catalyses the reaction tRNA(Pro) + L-proline + ATP = L-prolyl-tRNA(Pro) + AMP + diphosphate. Functionally, catalyzes the attachment of proline to tRNA(Pro) in a two-step reaction: proline is first activated by ATP to form Pro-AMP and then transferred to the acceptor end of tRNA(Pro). As ProRS can inadvertently accommodate and process non-cognate amino acids such as alanine and cysteine, to avoid such errors it has two additional distinct editing activities against alanine. One activity is designated as 'pretransfer' editing and involves the tRNA(Pro)-independent hydrolysis of activated Ala-AMP. The other activity is designated 'posttransfer' editing and involves deacylation of mischarged Ala-tRNA(Pro). The misacylated Cys-tRNA(Pro) is not edited by ProRS. In Albidiferax ferrireducens (strain ATCC BAA-621 / DSM 15236 / T118) (Rhodoferax ferrireducens), this protein is Proline--tRNA ligase.